The sequence spans 503 residues: Cardiolipin synthase (503 aa).

3 helical membrane-spanning segments follow: residues 5–25 (LNVL…RSFW), 29–49 (IVGA…IVIF), and 59–79 (LTWL…YLMF). PLD phosphodiesterase domains follow at residues 238–265 (INYR…GDEY) and 416–443 (TRGF…DMRS). Active-site residues include H243, K245, D250, H421, K423, and D428.

It belongs to the phospholipase D family. Cardiolipin synthase subfamily.

It localises to the cell membrane. The catalysed reaction is 2 a 1,2-diacyl-sn-glycero-3-phospho-(1'-sn-glycerol) = a cardiolipin + glycerol. Functionally, catalyzes the reversible phosphatidyl group transfer from one phosphatidylglycerol molecule to another to form cardiolipin (CL) (diphosphatidylglycerol) and glycerol. This Halalkalibacterium halodurans (strain ATCC BAA-125 / DSM 18197 / FERM 7344 / JCM 9153 / C-125) (Bacillus halodurans) protein is Cardiolipin synthase (cls).